Here is a 407-residue protein sequence, read N- to C-terminus: Na(+)-translocating NADH-quinone reductase subunit F (407 aa).

A helical transmembrane segment spans residues 3–23; that stretch reads IILGVAMFTGIVMVLVLLILF. One can recognise a 2Fe-2S ferredoxin-type domain in the interval 32–126; the sequence is GDIAVEVNGD…NLKIELPEEI (95 aa). The [2Fe-2S] cluster site is built by C69, C75, C78, and C110. The FAD-binding FR-type domain occupies 129 to 269; the sequence is VKKWECEVIS…SGPFGEFFAK (141 aa).

It belongs to the NqrF family. As to quaternary structure, composed of six subunits; NqrA, NqrB, NqrC, NqrD, NqrE and NqrF. [2Fe-2S] cluster serves as cofactor. It depends on FAD as a cofactor.

The protein resides in the cell inner membrane. The enzyme catalyses a ubiquinone + n Na(+)(in) + NADH + H(+) = a ubiquinol + n Na(+)(out) + NAD(+). In terms of biological role, NQR complex catalyzes the reduction of ubiquinone-1 to ubiquinol by two successive reactions, coupled with the transport of Na(+) ions from the cytoplasm to the periplasm. The first step is catalyzed by NqrF, which accepts electrons from NADH and reduces ubiquinone-1 to ubisemiquinone by a one-electron transfer pathway. The chain is Na(+)-translocating NADH-quinone reductase subunit F from Serratia proteamaculans (strain 568).